The sequence spans 486 residues: ATP synthase subunit beta, chloroplastic (486 aa).

ATP is bound at residue 154–161; the sequence is GGAGVGKT.

Belongs to the ATPase alpha/beta chains family. F-type ATPases have 2 components, CF(1) - the catalytic core - and CF(0) - the membrane proton channel. CF(1) has five subunits: alpha(3), beta(3), gamma(1), delta(1), epsilon(1). CF(0) has four main subunits: a(1), b(1), b'(1) and c(9-12).

The protein resides in the plastid. It is found in the chloroplast thylakoid membrane. The catalysed reaction is ATP + H2O + 4 H(+)(in) = ADP + phosphate + 5 H(+)(out). In terms of biological role, produces ATP from ADP in the presence of a proton gradient across the membrane. The catalytic sites are hosted primarily by the beta subunits. The protein is ATP synthase subunit beta, chloroplastic of Dennstaedtia punctilobula (Hay-scented fern).